A 201-amino-acid chain; its full sequence is Cytochrome c oxidase assembly protein CtaG (201 aa).

The Cytoplasmic segment spans residues 1 to 12; it reads MTDQGENEKKQR. Residues 13–35 traverse the membrane as a helical; Signal-anchor for type II membrane protein segment; it reads RSNATIAVACLSFFVCMIGAAYA. Topologically, residues 36 to 201 are periplasmic; that stretch reads SVPLYRIFCQ…KAVGSTRNGG (166 aa).

It belongs to the COX11/CtaG family.

The protein resides in the cell inner membrane. In terms of biological role, exerts its effect at some terminal stage of cytochrome c oxidase synthesis, probably by being involved in the insertion of the copper B into subunit I. The polypeptide is Cytochrome c oxidase assembly protein CtaG (Brucella suis biovar 1 (strain 1330)).